Consider the following 152-residue polypeptide: Xanthine-guanine phosphoribosyltransferase (152 aa).

5-phospho-alpha-D-ribose 1-diphosphate contacts are provided by residues 37–38 (RG) and 88–96 (DDLVDTGGT). Aspartate 89 lines the Mg(2+) pocket. Aspartate 92 and isoleucine 135 together coordinate guanine. The xanthine site is built by aspartate 92 and isoleucine 135. Residues 92-96 (DTGGT) and 134-135 (WI) each bind GMP.

It belongs to the purine/pyrimidine phosphoribosyltransferase family. XGPT subfamily. In terms of assembly, homotetramer. The cofactor is Mg(2+).

The protein localises to the cell inner membrane. It catalyses the reaction GMP + diphosphate = guanine + 5-phospho-alpha-D-ribose 1-diphosphate. It carries out the reaction XMP + diphosphate = xanthine + 5-phospho-alpha-D-ribose 1-diphosphate. The catalysed reaction is IMP + diphosphate = hypoxanthine + 5-phospho-alpha-D-ribose 1-diphosphate. It functions in the pathway purine metabolism; GMP biosynthesis via salvage pathway; GMP from guanine: step 1/1. The protein operates within purine metabolism; XMP biosynthesis via salvage pathway; XMP from xanthine: step 1/1. Its function is as follows. Purine salvage pathway enzyme that catalyzes the transfer of the ribosyl-5-phosphate group from 5-phospho-alpha-D-ribose 1-diphosphate (PRPP) to the N9 position of the 6-oxopurines guanine and xanthine to form the corresponding ribonucleotides GMP (guanosine 5'-monophosphate) and XMP (xanthosine 5'-monophosphate), with the release of PPi. To a lesser extent, also acts on hypoxanthine. The protein is Xanthine-guanine phosphoribosyltransferase of Yersinia enterocolitica serotype O:8 / biotype 1B (strain NCTC 13174 / 8081).